Consider the following 194-residue polypeptide: Ribose 1,5-bisphosphate phosphokinase PhnN (194 aa).

24-31 (GPSGAGKD) contacts ATP.

The protein belongs to the ribose 1,5-bisphosphokinase family.

It catalyses the reaction alpha-D-ribose 1,5-bisphosphate + ATP = 5-phospho-alpha-D-ribose 1-diphosphate + ADP. The protein operates within metabolic intermediate biosynthesis; 5-phospho-alpha-D-ribose 1-diphosphate biosynthesis; 5-phospho-alpha-D-ribose 1-diphosphate from D-ribose 5-phosphate (route II): step 3/3. Functionally, catalyzes the phosphorylation of ribose 1,5-bisphosphate to 5-phospho-D-ribosyl alpha-1-diphosphate (PRPP). This Rhodopseudomonas palustris (strain ATCC BAA-98 / CGA009) protein is Ribose 1,5-bisphosphate phosphokinase PhnN.